A 90-amino-acid chain; its full sequence is MTRTVMCRKYQEELPGLERPPYPGAKGQDIFDHVSAKAWADWQKHQTLLINEKRLNMMNADDRKYLQGEMDKFFSGEEYAKADGYVPPAE.

Belongs to the Fe(2+)-trafficking protein family.

In terms of biological role, could be a mediator in iron transactions between iron acquisition and iron-requiring processes, such as synthesis and/or repair of Fe-S clusters in biosynthetic enzymes. In Pseudomonas fluorescens (strain ATCC BAA-477 / NRRL B-23932 / Pf-5), this protein is Probable Fe(2+)-trafficking protein.